The sequence spans 776 residues: Microtubule-associated protein tau (776 aa).

Basic and acidic residues predominate over residues 1–26 (MAEPRQEFEVMEDHAGTYGLGDRKDQ). Residues 1-591 (MAEPRQEFEV…PVPMPDLKNV (591 aa)) form a disordered region. An N-acetylalanine modification is found at A2. Phosphotyrosine is present on residues Y18 and Y29. K44 is covalently cross-linked (Glycyl lysine isopeptide (Lys-Gly) (interchain with G-Cter in ubiquitin)). S46 and S61 each carry phosphoserine. Over residues 61-71 (SETSDAKSTPT) the composition is skewed to polar residues. Residues T69, T71, and T111 each carry the phosphothreonine modification. 2 stretches are compositionally biased toward basic and acidic residues: residues 179–189 (EGGRHAPELLK) and 207–216 (GGKERPGSKE). Position 214 is a phosphoserine (S214). Residues 217-228 (EVDEDRDVDESS) show a composition bias toward acidic residues. Composition is skewed to basic and acidic residues over residues 293 to 303 (KGQDAHLEFTF) and 314 to 323 (EQAHSEEHLG). A compositionally biased stretch (low complexity) spans 324–340 (RAAFPGAPGEGPEARGP). 2 stretches are compositionally biased toward basic and acidic residues: residues 344 to 356 (EDTK…EPSE) and 381 to 393 (KSKD…DKKA). Residues 440 to 452 (KYVSSVTPRTGSS) show a composition bias toward polar residues. The span at 455–466 (KEMKLKGADGKT) shows a compositional bias: basic and acidic residues. Residue T470 is modified to Phosphothreonine. The residue at position 472 (R472) is an Omega-N-methylarginine. K480 carries the N6,N6-dimethyllysine; alternate modification. An N6-acetyllysine; alternate modification is found at K480. A phosphothreonine mark is found at T486, T492, and T498. 3 positions are modified to phosphoserine: S502, S526, and S530. Basic and acidic residues predominate over residues 517 to 528 (RSERGEPPKSGD). Residues 529-549 (RSGYSSPGSPGTPGSRSRTPS) are compositionally biased toward low complexity. Y532 bears the Phosphotyrosine mark. Phosphoserine is present on residues S533, S534, and S537. A phosphothreonine mark is found at T540 and T547. A Phosphoserine modification is found at S549. T552 carries the post-translational modification Phosphothreonine. At K560 the chain carries N6-acetyllysine. T566 bears the Phosphothreonine mark. S570 and S572 each carry phosphoserine. Tau/MAP repeat units lie at residues 579–609 (QTAP…GGGK), 610–640 (VQII…GGGS), 641–671 (VQIV…GGGQ), and 672–703 (VEVK…GGGN). A Glycyl lysine isopeptide (Lys-Gly) (interchain with G-Cter in ubiquitin) cross-link involves residue K589. K594 is modified (N6-acetyllysine; alternate). K594 is modified (N6-methyllysine; alternate). K594 is covalently cross-linked (Glycyl lysine isopeptide (Lys-Gly) (interchain with G-Cter in ubiquitin); alternate). A Phosphoserine modification is found at S597. Residue K602 forms a Glycyl lysine isopeptide (Lys-Gly) (interchain with G-Cter in ubiquitin) linkage. K616 carries the N6-acetyllysine; alternate modification. A Glycyl lysine isopeptide (Lys-Gly) (interchain with G-Cter in ubiquitin); alternate cross-link involves residue K616. Phosphoserine is present on residues S620 and S624. The residue at position 625 (K625) is an N6-acetyllysine. Phosphoserine is present on S628. Residue K633 is modified to N6-acetyllysine; alternate. A Glycyl lysine isopeptide (Lys-Gly) (interchain with G-Cter in ubiquitin); alternate cross-link involves residue K633. S640 is modified (phosphoserine). An N6,N6-dimethyllysine; alternate modification is found at K646. 3 positions are modified to N6-acetyllysine; alternate: K646, K652, and K656. Glycyl lysine isopeptide (Lys-Gly) (interchain with G-Cter in ubiquitin); alternate cross-links involve residues K646, K652, and K656. S659 bears the Phosphoserine mark. N6-acetyllysine; alternate occurs at positions 666, 678, and 682. Residues K666, K678, and K682 each participate in a glycyl lysine isopeptide (Lys-Gly) (interchain with G-Cter in ubiquitin); alternate cross-link. At R684 the chain carries Omega-N-methylarginine. S687 is modified (phosphoserine). K688 participates in a covalent cross-link: Glycyl lysine isopeptide (Lys-Gly) (interchain with G-Cter in ubiquitin). S691 is modified (phosphoserine). The residue at position 704 (K704) is an N6-acetyllysine; alternate. A Glycyl lysine isopeptide (Lys-Gly) (interchain with G-Cter in ubiquitin); alternate cross-link involves residue K704. K710 is covalently cross-linked (Glycyl lysine isopeptide (Lys-Gly) (interchain with G-Cter in ubiquitin)). Position 720 is an N6-acetyllysine; alternate (K720). K720 participates in a covalent cross-link: Glycyl lysine isopeptide (Lys-Gly) (interchain with G-Cter in ubiquitin); alternate. Y729 is subject to Phosphotyrosine. S731 and S735 each carry phosphoserine. The interval 733–752 (VVSGDTSPRHLSNVSSTGSI) is disordered. Residues 736 to 751 (GDTSPRHLSNVSSTGS) show a composition bias toward polar residues. The residue at position 738 (T738) is a Phosphothreonine. Phosphoserine occurs at positions 739, 744, 751, and 757. T762 is subject to Phosphothreonine.

In terms of assembly, interacts with MARK1, MARK2, MARK3 and MARK4. Interacts with SQSTM1 when polyubiquitinated. Interacts with PSMC2 through SQSTM1. Interacts with FKBP4. Binds to CSNK1D. Interacts with SGK1. Interacts with EPM2A; the interaction dephosphorylates MAPT at Ser-396. Interacts with PIN1. Interacts with LRRK2. Interacts with LRP1, leading to endocytosis; this interaction is reduced in the presence of LRPAP1/RAP. In terms of processing, polyubiquitinated. Requires functional TRAF6 and may provoke SQSTM1-dependent degradation by the proteasome. Phosphorylation at various serine and threonine residues in S-P or T-P motifs by proline-directed protein kinases (PDPK1, CDK1, CDK5, GSK3, MAPK) (a few sites per protein in interphase, more in mitosis), and at serine residues in K-X-G-S motifs by MAP/microtubule affinity-regulating kinase (MARK1, MARK2, MARK3 or MARK4), causing detachment from microtubules, and their disassembly. Phosphorylation at Ser-597 by BRSK1 and BRSK2 in neurons affects ability to bind microtubules and plays a role in neuron polarization. Phosphorylated by PHK. Dephosphorylation at several serine and threonine residues by the serine/threonine phosphatase PPP5C. Phosphorylation at Ser-214 by SGK1 mediates microtubule depolymerization and neurite formation in hippocampal neurons.

It is found in the cytoplasm. The protein localises to the cytosol. The protein resides in the cell membrane. Its subcellular location is the cytoskeleton. It localises to the cell projection. It is found in the axon. The protein localises to the dendrite. Promotes microtubule assembly and stability, and might be involved in the establishment and maintenance of neuronal polarity. The C-terminus binds axonal microtubules while the N-terminus binds neural plasma membrane components, suggesting that tau functions as a linker protein between both. Axonal polarity is predetermined by tau localization (in the neuronal cell) in the domain of the cell body defined by the centrosome. The short isoforms allow plasticity of the cytoskeleton whereas the longer isoforms may preferentially play a role in its stabilization. This is Microtubule-associated protein tau (MAPT) from Pan troglodytes (Chimpanzee).